Here is a 468-residue protein sequence, read N- to C-terminus: MAKTLYEKVFDAHVVYEGKNELPILYIDRHLIHEVTSPQAFSGLKMAKRRMARADLTLATIDHDVSTKSVDLNACSDMAKEQITTLMQNTKEFGVRLLGLGDKNQGIVHIVGPELGFTLPGVTLVCGDSHTATHGAFGALAFGIGTSEVEHVMATQTLKQAKLKTMKIECKGQFQKGVYTKDLILYLIAQYGTAKGTGYAIEFCGELIRNLSMEARMTLCNMAIEFGAKVGMIAPDEITFEYIKGKEFAPKGEEFQKYCEYWKSLRSDEGAKYDASITLDVSKIKPQISYGTNPSQVIGIDEKIPKISDFKNQSEQKSLLDALYYVNLEQDQVIEGVKIDIVFIGSCTNGRLEDLKIAADILKGRKIHKNVKALIVPGSMQVRKEAENLGLDKIFIEAGCEWRYAGCSMCLGMNDDKANSGQRVASTSNRNFVGRQGKGSITHLMSPASAAACAIEGVICDNRKYLGV.

[4Fe-4S] cluster-binding residues include C347, C407, and C410.

Belongs to the aconitase/IPM isomerase family. LeuC type 1 subfamily. Heterodimer of LeuC and LeuD. The cofactor is [4Fe-4S] cluster.

It catalyses the reaction (2R,3S)-3-isopropylmalate = (2S)-2-isopropylmalate. It participates in amino-acid biosynthesis; L-leucine biosynthesis; L-leucine from 3-methyl-2-oxobutanoate: step 2/4. Functionally, catalyzes the isomerization between 2-isopropylmalate and 3-isopropylmalate, via the formation of 2-isopropylmaleate. The chain is 3-isopropylmalate dehydratase large subunit from Campylobacter jejuni (strain RM1221).